A 267-amino-acid chain; its full sequence is Proenkephalin-A (267 aa).

The N-terminal stretch at 1-24 is a signal peptide; it reads MARFLTLCTWLLLLGPGLLATVRA. 3 cysteine pairs are disulfide-bonded: cysteine 26–cysteine 48, cysteine 30–cysteine 52, and cysteine 33–cysteine 65. The span at 163-175 shows a compositional bias: basic and acidic residues; that stretch reads TGDNRERSHHQDG. The interval 163 to 182 is disordered; the sequence is TGDNRERSHHQDGSDNEEEV. 2 propeptides span residues 196 to 207 and 217 to 227; these read SPQLEDEAKELQ and VGRPEWWMDYQ. At serine 251 the chain carries Phosphoserine.

It belongs to the opioid neuropeptide precursor family. In terms of processing, proenkephalin-A is cleaved by CTSL to generate Met-enkephalin. Processed and degraded by ACE. Post-translationally, probably cleaved by ACE. In terms of processing, processed by ACE to generate Met-enkephalin in the nucleus accumbens of the brain. The N-terminal domain contains 6 conserved cysteines thought to be involved in disulfide bonding and/or processing.

The protein resides in the cytoplasmic vesicle. Its subcellular location is the secretory vesicle. It localises to the chromaffin granule lumen. It is found in the secreted. Functionally, neuropeptide that competes with and mimic the effects of opiate drugs. They play a role in a number of physiologic functions, including pain perception and responses to stress. Its function is as follows. Met-enkephalin-Arg-Phe neuropeptide acts as a strong ligand of Mu-type opioid receptor OPRM1. Met-enkephalin-Arg-Phe-binding to OPRM1 in the nucleus accumbens of the brain increases activation of OPRM1, leading to long-term synaptic depression of glutamate release. Increases glutamate release in the striatum and decreases GABA concentration in the striatum. In terms of biological role, increases glutamate release in the striatum. This chain is Proenkephalin-A, found in Homo sapiens (Human).